Here is a 254-residue protein sequence, read N- to C-terminus: MAGHSKFKNIMHRKGAQDKKRSAMFSKLSREITVAAKMGMPDPDMNPRLRAAINAAKAQSMPKDNIARAIDKASKGEGDNYEEVRYEGYGPGGVAIIVEALTDNRNRTATNVRTAFAKNGGNLGASGAVSHGFERLGLIEYPGKVGDEEKVLEAAIEAGAEDVESDMGDGDENPGSHQIWVAVESLHEVARELEKTLGEAEGVKLAWKPSMKTSVDADNAATLLKLIDVLEDDDDVQTVWGNYDIPDDVMETLG.

A compositionally biased stretch (basic residues) spans 1–14 (MAGHSKFKNIMHRK). Residues 1–22 (MAGHSKFKNIMHRKGAQDKKRS) form a disordered region.

Belongs to the TACO1 family.

The protein resides in the cytoplasm. This chain is Probable transcriptional regulatory protein Saro_0419, found in Novosphingobium aromaticivorans (strain ATCC 700278 / DSM 12444 / CCUG 56034 / CIP 105152 / NBRC 16084 / F199).